The following is a 398-amino-acid chain: RNA-binding protein rnc1 (398 aa).

The disordered stretch occupies residues 40–78 (KVSIPTPKPSTPLSTLTNGSTIQQSMTNQPEPTSQVPPI). Thr50 is modified (phosphothreonine). Positions 57–76 (NGSTIQQSMTNQPEPTSQVP) are enriched in polar residues. KH domains follow at residues 93–157 (QLTL…YRFI) and 178–243 (PRKL…IWEI). Over residues 274–290 (ASTASPQQVSPPAAPST) the composition is skewed to low complexity. The tract at residues 274–295 (ASTASPQQVSPPAAPSTTSGEA) is disordered. Positions 320-385 (KVTQNISIPA…EENEKALFLL (66 aa)) constitute a KH 3 domain.

In terms of processing, phosphorylated by pmk1. Phosphorylation causes enhancement of the RNA-binding activity.

It is found in the cytoplasm. Its function is as follows. Binds and stabilizes pmp1 mRNA and hence acts as a negative regulator of pmk1 signaling. Overexpression suppresses the Cl(-) sensitivity of calcineurin deletion. The protein is RNA-binding protein rnc1 of Schizosaccharomyces pombe (strain 972 / ATCC 24843) (Fission yeast).